Reading from the N-terminus, the 62-residue chain is Photosystem II reaction center protein Z (62 aa).

Helical transmembrane passes span 8-28 (ALFALIATSSILLISVPIVFA) and 41-61 (FSGTSLWIGLVFLVAILNSLI).

This sequence belongs to the PsbZ family. PSII is composed of 1 copy each of membrane proteins PsbA, PsbB, PsbC, PsbD, PsbE, PsbF, PsbH, PsbI, PsbJ, PsbK, PsbL, PsbM, PsbT, PsbY, PsbZ, Psb30/Ycf12, at least 3 peripheral proteins of the oxygen-evolving complex and a large number of cofactors. It forms dimeric complexes.

The protein localises to the plastid. The protein resides in the chloroplast thylakoid membrane. Functionally, may control the interaction of photosystem II (PSII) cores with the light-harvesting antenna, regulates electron flow through the 2 photosystem reaction centers. PSII is a light-driven water plastoquinone oxidoreductase, using light energy to abstract electrons from H(2)O, generating a proton gradient subsequently used for ATP formation. This Drimys granadensis protein is Photosystem II reaction center protein Z.